Consider the following 286-residue polypeptide: Shikimate dehydrogenase (NADP(+)) (286 aa).

Shikimate-binding positions include 25-27 (SLS) and Thr-72. Catalysis depends on Lys-76, which acts as the Proton acceptor. Position 88 (Glu-88) interacts with NADP(+). Residues Asn-97 and Asp-113 each contribute to the shikimate site. NADP(+) is bound by residues 138–142 (GSGGA), 162–167 (NRTIER), and Ile-232. Tyr-234 contributes to the shikimate binding site. Residue Gly-255 participates in NADP(+) binding.

Belongs to the shikimate dehydrogenase family. In terms of assembly, homodimer.

The enzyme catalyses shikimate + NADP(+) = 3-dehydroshikimate + NADPH + H(+). It participates in metabolic intermediate biosynthesis; chorismate biosynthesis; chorismate from D-erythrose 4-phosphate and phosphoenolpyruvate: step 4/7. Functionally, involved in the biosynthesis of the chorismate, which leads to the biosynthesis of aromatic amino acids. Catalyzes the reversible NADPH linked reduction of 3-dehydroshikimate (DHSA) to yield shikimate (SA). This chain is Shikimate dehydrogenase (NADP(+)), found in Magnetococcus marinus (strain ATCC BAA-1437 / JCM 17883 / MC-1).